A 217-amino-acid chain; its full sequence is Glycosylphosphatidylinositol anchor biosynthesis protein 11 (217 aa).

6 helical membrane passes run 45-61, 74-94, 111-131, 138-158, 169-189, and 195-215; these read TWQT…YWFI, WLLV…ATVY, VTCI…GAPF, TWLL…SVLN, YFIS…LDWD, and WPIP…TFCS.

It belongs to the PIGF family.

The protein resides in the endoplasmic reticulum membrane. The protein operates within glycolipid biosynthesis; glycosylphosphatidylinositol-anchor biosynthesis. Its function is as follows. Acts in the GPI biosynthetic pathway between GlcNAc-PI synthesis and GPI transfer to protein. In Eremothecium gossypii (strain ATCC 10895 / CBS 109.51 / FGSC 9923 / NRRL Y-1056) (Yeast), this protein is Glycosylphosphatidylinositol anchor biosynthesis protein 11 (GPI11).